We begin with the raw amino-acid sequence, 122 residues long: Large ribosomal subunit protein uL14 (122 aa).

Belongs to the universal ribosomal protein uL14 family. Part of the 50S ribosomal subunit. Forms a cluster with proteins L3 and L19. In the 70S ribosome, L14 and L19 interact and together make contacts with the 16S rRNA in bridges B5 and B8.

Its function is as follows. Binds to 23S rRNA. Forms part of two intersubunit bridges in the 70S ribosome. In Synechococcus sp. (strain JA-3-3Ab) (Cyanobacteria bacterium Yellowstone A-Prime), this protein is Large ribosomal subunit protein uL14.